A 288-amino-acid polypeptide reads, in one-letter code: Mortality factor 4-like protein 2 (288 aa).

The span at 1-15 (MSSRKQGSQPRGQQS) shows a compositional bias: polar residues. The tract at residues 1–113 (MSSRKQGSQP…RADPTVESEE (113 aa)) is disordered. Ser-71 is modified (phosphoserine). An MRG domain is found at 117 to 288 (NRMEVKVKIP…ASAEYHRKAL (172 aa)).

In terms of assembly, component of the NuA4 histone acetyltransferase complex which contains the catalytic subunit KAT5/TIP60 and the subunits EP400, TRRAP/PAF400, BRD8/SMAP, EPC1, DMAP1/DNMAP1, RUVBL1/TIP49, RUVBL2, ING3, actin, ACTL6A/BAF53A, MORF4L1/MRG15, MORF4L2/MRGX, MRGBP, YEATS4/GAS41 and VPS72/YL1. The NuA4 complex interacts with MYC and the adenovirus E1A protein. MORF4L1 may also participate in the formation of NuA4 related complexes which lack the KAT5/TIP60 catalytic subunit, but which include the SWI/SNF related protein SRCAP. Component of the MSIN3A histone deacetylase complex, which includes SIN3A, HDAC2, ARID4B, MORF4L1, RBBP4/RbAp48, and RBBP7/RbAp46. Interacts with MRFAP1 and RB1. May also interact with one or more as yet undefined members of the TLE (transducin-like enhancer of split) family of transcriptional repressors.

The protein resides in the nucleus. Its function is as follows. Component of the NuA4 histone acetyltransferase complex which is involved in transcriptional activation of select genes principally by acetylation of nucleosomal histone H4 and H2A. This modification may both alter nucleosome - DNA interactions and promote interaction of the modified histones with other proteins which positively regulate transcription. This complex may be required for the activation of transcriptional programs associated with oncogene and proto-oncogene mediated growth induction, tumor suppressor mediated growth arrest and replicative senescence, apoptosis, and DNA repair. The NuA4 complex ATPase and helicase activities seem to be, at least in part, contributed by the association of RUVBL1 and RUVBL2 with EP400. NuA4 may also play a direct role in DNA repair when directly recruited to sites of DNA damage. Also a component of the MSIN3A complex which acts to repress transcription by deacetylation of nucleosomal histones. This chain is Mortality factor 4-like protein 2 (MORF4L2), found in Macaca fascicularis (Crab-eating macaque).